We begin with the raw amino-acid sequence, 446 residues long: Methionine aminopeptidase 2-1 (446 aa).

Positions 1–88 are disordered; that stretch reads MAAQVTPELA…PPRVILSSIF (88 aa). The segment covering 32 to 44 has biased composition (acidic residues); sequence ENEDVESDDDNEG. Residues 57 to 72 show a composition bias toward basic residues; sequence AKKKKKKKPKKKKKGG. His-196 serves as a coordination point for substrate. A divalent metal cation contacts are provided by Asp-216, Asp-227, and His-296. A substrate-binding site is contributed by His-304. A divalent metal cation is bound by residues Glu-332 and Glu-427.

It belongs to the peptidase M24A family. Methionine aminopeptidase eukaryotic type 2 subfamily. Co(2+) is required as a cofactor. Requires Zn(2+) as cofactor. It depends on Mn(2+) as a cofactor. Fe(2+) serves as cofactor.

Its subcellular location is the cytoplasm. The enzyme catalyses Release of N-terminal amino acids, preferentially methionine, from peptides and arylamides.. Functionally, cotranslationally removes the N-terminal methionine from nascent proteins. The N-terminal methionine is often cleaved when the second residue in the primary sequence is small and uncharged (Met-Ala-, Cys, Gly, Pro, Ser, Thr, or Val). The polypeptide is Methionine aminopeptidase 2-1 (Blastomyces gilchristii (strain SLH14081) (Blastomyces dermatitidis)).